Reading from the N-terminus, the 72-residue chain is UPF0270 protein YheU (72 aa).

It belongs to the UPF0270 family.

The sequence is that of UPF0270 protein YheU from Salmonella dublin (strain CT_02021853).